The sequence spans 445 residues: C4-dicarboxylate transport protein (445 aa).

8 helical membrane passes run 24–44, 62–82, 105–125, 163–183, 201–221, 237–257, 322–342, and 370–390; these read VLYI…WLSP, LIKM…IAHI, FALI…GLAA, GDIL…MALG, FGVI…AMAF, LVAL…GVIA, IYMT…LSFS, and AGTL…VFSI.

The protein belongs to the dicarboxylate/amino acid:cation symporter (DAACS) (TC 2.A.23) family.

The protein localises to the cell inner membrane. Its function is as follows. Responsible for the transport of dicarboxylates such as succinate, fumarate, and malate from the periplasm across the membrane. This Rhodopseudomonas palustris (strain HaA2) protein is C4-dicarboxylate transport protein.